A 715-amino-acid chain; its full sequence is uncharacterized protein (715 aa).

Disordered regions lie at residues 192–216, 300–348, 461–481, and 580–630; these read ASSVEESNRANNTSPYPPSNSSVTA, NEEV…TSKR, ASSSSFGRSHSHLGTSLRSNE, and FTVS…KPPK. Positions 202 to 213 are enriched in low complexity; sequence NNTSPYPPSNSS. Composition is skewed to polar residues over residues 301-326 and 472-481; these read EEVSNNHARSPHSSRACNTIPSNKND and HLGTSLRSNE. Residues 601–614 are compositionally biased toward low complexity; it reads TDSSPSDTISSSPT.

This is an uncharacterized protein from Schizosaccharomyces pombe (strain 972 / ATCC 24843) (Fission yeast).